The following is a 568-amino-acid chain: Potassium-transporting ATPase potassium-binding subunit (568 aa).

The next 10 helical transmembrane spans lie at Thr3–Gly23, Phe64–Val84, Phe133–Ile153, Ile179–Gly199, Met255–Tyr275, Leu281–Val301, Phe375–Ile395, Ile418–Ser438, Ile497–Leu517, and Thr536–Val556.

Belongs to the KdpA family. In terms of assembly, the system is composed of three essential subunits: KdpA, KdpB and KdpC.

Its subcellular location is the cell inner membrane. In terms of biological role, part of the high-affinity ATP-driven potassium transport (or Kdp) system, which catalyzes the hydrolysis of ATP coupled with the electrogenic transport of potassium into the cytoplasm. This subunit binds the periplasmic potassium ions and delivers the ions to the membrane domain of KdpB through an intramembrane tunnel. This chain is Potassium-transporting ATPase potassium-binding subunit, found in Bacteroides thetaiotaomicron (strain ATCC 29148 / DSM 2079 / JCM 5827 / CCUG 10774 / NCTC 10582 / VPI-5482 / E50).